The chain runs to 325 residues: Cytochrome c1, heme protein, mitochondrial (325 aa).

Residues 1–84 constitute a mitochondrion transit peptide; sequence MAAAAATLRG…AVALHSAVSA (84 aa). Residues 85 to 281 are Mitochondrial intermembrane-facing; it reads SDLELHPPSY…TFLRWAAEPE (197 aa). The Cytochrome c domain maps to 108–209; sequence TSIRRGFQVY…IVRARHGGED (102 aa). The heme c site is built by C121, C124, H125, and M244. A helical membrane pass occupies residues 282 to 315; it reads HDHRKRMGLKMLLMMGLLLPLVYAMKRHKWSVLK. Residues 316–325 are Mitochondrial matrix-facing; it reads SRKLAYRPPK.

Belongs to the cytochrome c family. As to quaternary structure, component of the ubiquinol-cytochrome c oxidoreductase (cytochrome b-c1 complex, complex III, CIII), a multisubunit enzyme composed of 11 subunits. The complex is composed of 3 respiratory subunits cytochrome b, cytochrome c1 and Rieske protein UQCRFS1, 2 core protein subunits UQCRC1/QCR1 and UQCRC2/QCR2, and 6 low-molecular weight protein subunits UQCRH/QCR6, UQCRB/QCR7, UQCRQ/QCR8, UQCR10/QCR9, UQCR11/QCR10 and subunit 9, the cleavage product of Rieske protein UQCRFS1. The complex exists as an obligatory dimer and forms supercomplexes (SCs) in the inner mitochondrial membrane with NADH-ubiquinone oxidoreductase (complex I, CI) and cytochrome c oxidase (complex IV, CIV), resulting in different assemblies (supercomplex SCI(1)III(2)IV(1) and megacomplex MCI(2)III(2)IV(2)). Interacts with FLVCR2; this interaction occurs in the absence of heme and is disrupted upon heme binding. Heme c serves as cofactor.

It localises to the mitochondrion inner membrane. The enzyme catalyses a quinol + 2 Fe(III)-[cytochrome c](out) = a quinone + 2 Fe(II)-[cytochrome c](out) + 2 H(+)(out). Functionally, component of the ubiquinol-cytochrome c oxidoreductase, a multisubunit transmembrane complex that is part of the mitochondrial electron transport chain which drives oxidative phosphorylation. The respiratory chain contains 3 multisubunit complexes succinate dehydrogenase (complex II, CII), ubiquinol-cytochrome c oxidoreductase (cytochrome b-c1 complex, complex III, CIII) and cytochrome c oxidase (complex IV, CIV), that cooperate to transfer electrons derived from NADH and succinate to molecular oxygen, creating an electrochemical gradient over the inner membrane that drives transmembrane transport and the ATP synthase. The cytochrome b-c1 complex catalyzes electron transfer from ubiquinol to cytochrome c, linking this redox reaction to translocation of protons across the mitochondrial inner membrane, with protons being carried across the membrane as hydrogens on the quinol. In the process called Q cycle, 2 protons are consumed from the matrix, 4 protons are released into the intermembrane space and 2 electrons are passed to cytochrome c. Cytochrome c1 is a catalytic core subunit containing a c-type heme. It transfers electrons from the [2Fe-2S] iron-sulfur cluster of the Rieske protein to cytochrome c. This Bos taurus (Bovine) protein is Cytochrome c1, heme protein, mitochondrial (CYC1).